A 484-amino-acid polypeptide reads, in one-letter code: tRNA sulfurtransferase (484 aa).

The THUMP domain occupies 63 to 167; it reads QGIRDRLSCM…DQRLFVVHDQ (105 aa). Residues 185–186, lysine 267, glycine 289, and glutamine 298 each bind ATP; that span reads LM. A disulfide bridge connects residues cysteine 346 and cysteine 457. The Rhodanese domain occupies 405–483; it reads ALAGQVIIDI…GHANVRVYRP (79 aa). The active-site Cysteine persulfide intermediate is cysteine 457.

The protein belongs to the ThiI family.

It is found in the cytoplasm. The catalysed reaction is [ThiI sulfur-carrier protein]-S-sulfanyl-L-cysteine + a uridine in tRNA + 2 reduced [2Fe-2S]-[ferredoxin] + ATP + H(+) = [ThiI sulfur-carrier protein]-L-cysteine + a 4-thiouridine in tRNA + 2 oxidized [2Fe-2S]-[ferredoxin] + AMP + diphosphate. The enzyme catalyses [ThiS sulfur-carrier protein]-C-terminal Gly-Gly-AMP + S-sulfanyl-L-cysteinyl-[cysteine desulfurase] + AH2 = [ThiS sulfur-carrier protein]-C-terminal-Gly-aminoethanethioate + L-cysteinyl-[cysteine desulfurase] + A + AMP + 2 H(+). The protein operates within cofactor biosynthesis; thiamine diphosphate biosynthesis. Its function is as follows. Catalyzes the ATP-dependent transfer of a sulfur to tRNA to produce 4-thiouridine in position 8 of tRNAs, which functions as a near-UV photosensor. Also catalyzes the transfer of sulfur to the sulfur carrier protein ThiS, forming ThiS-thiocarboxylate. This is a step in the synthesis of thiazole, in the thiamine biosynthesis pathway. The sulfur is donated as persulfide by IscS. The sequence is that of tRNA sulfurtransferase from Pseudomonas syringae pv. tomato (strain ATCC BAA-871 / DC3000).